Reading from the N-terminus, the 336-residue chain is Fructose-1,6-bisphosphatase class 1 (336 aa).

4 residues coordinate Mg(2+): Glu-90, Asp-112, Leu-114, and Asp-115. Substrate is bound by residues 115-118 (DGSS), Asn-211, and Lys-277. Glu-283 serves as a coordination point for Mg(2+).

This sequence belongs to the FBPase class 1 family. As to quaternary structure, homotetramer. Mg(2+) is required as a cofactor.

It localises to the cytoplasm. The enzyme catalyses beta-D-fructose 1,6-bisphosphate + H2O = beta-D-fructose 6-phosphate + phosphate. It functions in the pathway carbohydrate biosynthesis; gluconeogenesis. In Pseudomonas savastanoi pv. phaseolicola (strain 1448A / Race 6) (Pseudomonas syringae pv. phaseolicola (strain 1448A / Race 6)), this protein is Fructose-1,6-bisphosphatase class 1.